We begin with the raw amino-acid sequence, 316 residues long: Aquaglyceroporin-2 (316 aa).

The segment at 1-31 (MADERGPINKSGPSSTYGATENNGESGGTRG) is disordered. Residues 1 to 59 (MADERGPINKSGPSSTYGATENNGESGGTRGAPATEDVIVIQDSGWYYIKFRFKEPFAE) lie on the Cytoplasmic side of the membrane. The segment covering 11 to 24 (SGPSSTYGATENNG) has biased composition (polar residues). Residues 60-80 (FLGTFILVAFGVGAIAQTVLS) traverse the membrane as a helical segment. The Extracellular segment spans residues 81–86 (KGATGN). Residues 87 to 107 (WITIALGFGLGLALGIAVSGH) traverse the membrane as a helical segment. Topologically, residues 108-131 (YSGGHLNPAVTITLAIYRKFPWVK) are cytoplasmic. The NPA 1 signature appears at 114–116 (NPA). The helical transmembrane segment at 132–152 (VPVYITAQVLGAFVAAAVIYL) threads the bilayer. The Extracellular portion of the chain corresponds to 153–187 (NYLPAIYNFAGDKRDVIGANATAGIFATYPQPFMS). Asparagine 172 carries an N-linked (GlcNAc...) asparagine glycan. Residues 188–208 (IGGAFFSEALGTFFLLFVILA) form a helical membrane-spanning segment. The Cytoplasmic portion of the chain corresponds to 209–219 (MTDERNVPTTR). The helical transmembrane segment at 220 to 240 (IVAPITIGLTLTAIAISLGFE) threads the bilayer. The Extracellular portion of the chain corresponds to 241–271 (TGFSLNAARDFGPRLFTFFIGYGVEVFTAYK). The NPA 2 signature appears at 246-248 (NAA). A helical membrane pass occupies residues 272-292 (FYFWIPLVAPIVGGLVAGFVY). Residues 293-316 (DSLLYWGEKSFLNKNVHHEHRAVA) lie on the Cytoplasmic side of the membrane.

It belongs to the MIP/aquaporin (TC 1.A.8) family.

The protein resides in the cell membrane. The protein localises to the membrane. The catalysed reaction is H2O(in) = H2O(out). It carries out the reaction glycerol(in) = glycerol(out). Polyethylene glycol (PEG) stimulates whereas glycerol inhibits the aquaporin activity. Functionally, water channel required to facilitate the transport of water across membranes. Stimulates plant drought tolerance by facilitating the transport of water from the arbuscular mycorrhiza fungus to host plants. In Rhizophagus irregularis (Arbuscular mycorrhizal fungus), this protein is Aquaglyceroporin-2.